The sequence spans 245 residues: UPF0246 protein LBUL_1917 (245 aa).

Belongs to the UPF0246 family.

This is UPF0246 protein LBUL_1917 from Lactobacillus delbrueckii subsp. bulgaricus (strain ATCC BAA-365 / Lb-18).